A 632-amino-acid polypeptide reads, in one-letter code: Maltase 1 (632 aa).

A compositionally biased stretch (basic and acidic residues) spans 1–29; sequence MEEGERWREGHVYQRSSETRKPTNYDRPD. The segment at 1-30 is disordered; sequence MEEGERWREGHVYQRSSETRKPTNYDRPDS. N-linked (GlcNAc...) asparagine glycans are attached at residues N179 and N212. Residue D280 is the Nucleophile of the active site. N333 carries N-linked (GlcNAc...) asparagine glycosylation. E348 (proton donor) is an active-site residue. Residues N461, N575, and N578 are each glycosylated (N-linked (GlcNAc...) asparagine).

The protein belongs to the glycosyl hydrolase 13 family.

The enzyme catalyses Hydrolysis of terminal, non-reducing (1-&gt;4)-linked alpha-D-glucose residues with release of alpha-D-glucose.. This is Maltase 1 (Mal-B1) from Drosophila virilis (Fruit fly).